The sequence spans 213 residues: Eukaryotic translation initiation factor 4E (213 aa).

Phosphoserine; by CK2 is present on residues serine 2 and serine 15. At threonine 22 the chain carries Phosphothreonine. Phosphoserine occurs at positions 28 and 30. A Glycyl lysine isopeptide (Lys-Gly) (interchain with G-Cter in ubiquitin) cross-link involves residue lysine 114.

This sequence belongs to the eukaryotic initiation factor 4E family. As to quaternary structure, component of the eIF4F complex, which composition varies with external and internal environmental conditions. It is composed of at least eIF4A (TIF1/TIF2), eIF4E (TIF45) and eIF4G (TIF4631 or TIF4632). Interacts with PAT1 in a RNA-dependent manner. eIF4E is also known to interact with other partners.

The protein resides in the cytoplasm. The protein localises to the nucleus. Recognizes and binds the 7-methylguanosine (m7G)-containing mRNA cap during an early step in the initiation of protein synthesis and facilitates ribosome binding by inducing the unwinding of the mRNAs secondary structures. In Saccharomyces cerevisiae (strain ATCC 204508 / S288c) (Baker's yeast), this protein is Eukaryotic translation initiation factor 4E (CDC33).